The primary structure comprises 914 residues: Alanine--tRNA ligase (914 aa).

Zn(2+)-binding residues include His613, His617, Cys717, and His721.

This sequence belongs to the class-II aminoacyl-tRNA synthetase family. Zn(2+) serves as cofactor.

Its subcellular location is the cytoplasm. The catalysed reaction is tRNA(Ala) + L-alanine + ATP = L-alanyl-tRNA(Ala) + AMP + diphosphate. Functionally, catalyzes the attachment of alanine to tRNA(Ala) in a two-step reaction: alanine is first activated by ATP to form Ala-AMP and then transferred to the acceptor end of tRNA(Ala). Also edits incorrectly charged Ser-tRNA(Ala) and Gly-tRNA(Ala) via its editing domain. The sequence is that of Alanine--tRNA ligase from Pyrococcus furiosus (strain ATCC 43587 / DSM 3638 / JCM 8422 / Vc1).